A 30-amino-acid chain; its full sequence is Protein Tat (30 aa).

The interval proline 1–tryptophan 30 is disordered. A Cell attachment site motif is present at residues arginine 6–asparagine 8. Positions lysine 13–tryptophan 30 are enriched in basic and acidic residues.

This sequence belongs to the lentiviruses Tat family. Interacts with host CCNT1. Associates with the P-TEFb complex composed at least of Tat, P-TEFb (CDK9 and CCNT1), TAR RNA, RNA Pol II. Recruits the HATs CREBBP, TAF1/TFIID, EP300, PCAF and GCN5L2. Interacts with host KAT5/Tip60; this interaction targets the latter to degradation. Interacts with the host deacetylase SIRT1. Interacts with host capping enzyme RNGTT; this interaction stimulates RNGTT. Binds to host KDR, and to the host integrins ITGAV/ITGB3 and ITGA5/ITGB1. Interacts with host KPNB1/importin beta-1 without previous binding to KPNA1/importin alpha-1. Interacts with EIF2AK2. Interacts with host nucleosome assembly protein NAP1L1; this interaction may be required for the transport of Tat within the nucleus, since the two proteins interact at the nuclear rim. Interacts with host C1QBP/SF2P32; this interaction involves lysine-acetylated Tat. Interacts with the host chemokine receptors CCR2, CCR3 and CXCR4. Interacts with host DPP4/CD26; this interaction may trigger an anti-proliferative effect. Interacts with host LDLR. Interacts with the host extracellular matrix metalloproteinase MMP1. Interacts with host PRMT6; this interaction mediates Tat's methylation. Interacts with, and is ubiquitinated by MDM2/Hdm2. Interacts with host PSMC3 and HTATIP2. Interacts with STAB1; this interaction may overcome SATB1-mediated repression of IL2 and IL2RA (interleukin) in T cells by binding to the same domain than HDAC1. Interacts (when acetylated on Lys-50 and Lys-51) with human CDK13, thereby increasing HIV-1 mRNA splicing and promoting the production of the doubly spliced HIV-1 protein Nef. Acetylation by EP300, CREBBP, GCN5L2/GCN5 and PCAF regulates the transactivation activity of Tat. EP300-mediated acetylation of Lys-50 promotes dissociation of Tat from the TAR RNA through the competitive binding to PCAF's bromodomain. In addition, the non-acetylated Tat's N-terminus can also interact with PCAF. PCAF-mediated acetylation of Lys-28 enhances Tat's binding to CCNT1. Lys-50 is deacetylated by SIRT1. In terms of processing, phosphorylated by EIF2AK2 on serine and threonine residues adjacent to the basic region important for TAR RNA binding and function. Phosphorylation of Tat by EIF2AK2 is dependent on the prior activation of EIF2AK2 by dsRNA. Post-translationally, asymmetrical arginine methylation by host PRMT6 seems to diminish the transactivation capacity of Tat and affects the interaction with host CCNT1. Polyubiquitination by MDM2 does not target Tat to degradation, but activates its transactivation function and fosters interaction with CCNT1 and TAR RNA.

The protein resides in the host nucleus. Its subcellular location is the host nucleolus. The protein localises to the host cytoplasm. It is found in the secreted. Its function is as follows. Transcriptional activator that increases RNA Pol II processivity, thereby increasing the level of full-length viral transcripts. Recognizes a hairpin structure at the 5'-LTR of the nascent viral mRNAs referred to as the transactivation responsive RNA element (TAR) and recruits the cyclin T1-CDK9 complex (P-TEFb complex) that will in turn hyperphosphorylate the RNA polymerase II to allow efficient elongation. The CDK9 component of P-TEFb and other Tat-activated kinases hyperphosphorylate the C-terminus of RNA Pol II that becomes stabilized and much more processive. Other factors such as HTATSF1/Tat-SF1, SUPT5H/SPT5, and HTATIP2 are also important for Tat's function. Besides its effect on RNA Pol II processivity, Tat induces chromatin remodeling of proviral genes by recruiting the histone acetyltransferases (HATs) CREBBP, EP300 and PCAF to the chromatin. This also contributes to the increase in proviral transcription rate, especially when the provirus integrates in transcriptionally silent region of the host genome. To ensure maximal activation of the LTR, Tat mediates nuclear translocation of NF-kappa-B by interacting with host RELA. Through its interaction with host TBP, Tat may also modulate transcription initiation. Tat can reactivate a latently infected cell by penetrating in it and transactivating its LTR promoter. In the cytoplasm, Tat is thought to act as a translational activator of HIV-1 mRNAs. Extracellular circulating Tat can be endocytosed by surrounding uninfected cells via the binding to several surface receptors such as CD26, CXCR4, heparan sulfate proteoglycans (HSPG) or LDLR. Neurons are rarely infected, but they internalize Tat via their LDLR. Endosomal low pH allows Tat to cross the endosome membrane to enter the cytosol and eventually further translocate into the nucleus, thereby inducing severe cell dysfunctions ranging from cell activation to cell death. Through its interaction with nuclear HATs, Tat is potentially able to control the acetylation-dependent cellular gene expression. Tat seems to inhibit the HAT activity of KAT5/Tip60 and TAF1, and consequently modify the expression of specific cellular genes. Modulates the expression of many cellular genes involved in cell survival, proliferation or in coding for cytokines (such as IL10) or cytokine receptors. May be involved in the derepression of host interleukin IL2 expression. Mediates the activation of cyclin-dependent kinases and dysregulation of microtubule network. Tat plays a role in T-cell and neurons apoptosis. Tat induced neurotoxicity and apoptosis probably contribute to neuroAIDS. Host extracellular matrix metalloproteinase MMP1 cleaves Tat and decreases Tat's mediated neurotoxicity. Circulating Tat also acts as a chemokine-like and/or growth factor-like molecule that binds to specific receptors on the surface of the cells, affecting many cellular pathways. In the vascular system, Tat binds to ITGAV/ITGB3 and ITGA5/ITGB1 integrins dimers at the surface of endothelial cells and competes with bFGF for heparin-binding sites, leading to an excess of soluble bFGF. Binds to KDR/VEGFR-2. All these Tat-mediated effects enhance angiogenesis in Kaposi's sarcoma lesions. This is Protein Tat from Human immunodeficiency virus type 1 group M subtype A (isolate Z321) (HIV-1).